A 104-amino-acid polypeptide reads, in one-letter code: Large ribosomal subunit protein bL21 (104 aa).

The protein belongs to the bacterial ribosomal protein bL21 family. In terms of assembly, part of the 50S ribosomal subunit. Contacts protein L20.

Its function is as follows. This protein binds to 23S rRNA in the presence of protein L20. This Streptococcus gordonii (strain Challis / ATCC 35105 / BCRC 15272 / CH1 / DL1 / V288) protein is Large ribosomal subunit protein bL21.